The primary structure comprises 1742 residues: NACHT and WD repeat domain-containing protein 2 (1742 aa).

LRR repeat units follow at residues 386-410 (FYEY…GHIN), 677-698 (LEDV…TRPS), 724-747 (VKNV…LYLQ), 883-906 (YSQE…VTAF), and 925-953 (LPKL…SSMD). One can recognise an NACHT domain in the interval 410-737 (NPLIIYGGPC…TLLVWANRHL (328 aa)). WD repeat units lie at residues 963–1004 (LSSS…LLRQ), 1007–1046 (TAQS…LLSE), 1140–1179 (FSGG…SPQL), 1229–1271 (KHNE…ASLQ), 1272–1311 (EISG…AMSN), 1314–1353 (KTGK…IEAV), 1355–1394 (KHEG…NLFR), 1396–1434 (NGQR…RVCN), 1476–1516 (EDGT…ICRR), 1522–1564 (NFLK…VHAS), and 1614–1653 (SLYK…DAAL).

The polypeptide is NACHT and WD repeat domain-containing protein 2 (NWD2) (Homo sapiens (Human)).